A 377-amino-acid polypeptide reads, in one-letter code: Erythronate-4-phosphate dehydrogenase (377 aa).

Ser45 and Thr67 together coordinate substrate. Residues 127–128 (QV), Asp147, and Thr176 each bind NAD(+). Residue Arg209 is part of the active site. Residue Asp233 coordinates NAD(+). Residue Glu238 is part of the active site. His255 serves as the catalytic Proton donor. Gly258 serves as a coordination point for NAD(+). Tyr259 is a substrate binding site.

This sequence belongs to the D-isomer specific 2-hydroxyacid dehydrogenase family. PdxB subfamily. As to quaternary structure, homodimer.

Its subcellular location is the cytoplasm. It catalyses the reaction 4-phospho-D-erythronate + NAD(+) = (R)-3-hydroxy-2-oxo-4-phosphooxybutanoate + NADH + H(+). The protein operates within cofactor biosynthesis; pyridoxine 5'-phosphate biosynthesis; pyridoxine 5'-phosphate from D-erythrose 4-phosphate: step 2/5. Functionally, catalyzes the oxidation of erythronate-4-phosphate to 3-hydroxy-2-oxo-4-phosphonooxybutanoate. The sequence is that of Erythronate-4-phosphate dehydrogenase from Vibrio vulnificus (strain CMCP6).